The following is a 549-amino-acid chain: Probable protein kinase UbiB (549 aa).

In terms of domain architecture, Protein kinase spans 123–501 (DFNETPLASA…QQQAHKSNYL (379 aa)). ATP is bound by residues 129–137 (LASASISQV) and lysine 152. Aspartate 287 functions as the Proton acceptor in the catalytic mechanism. A run of 2 helical transmembrane segments spans residues 498–518 (SNYL…LFNQ) and 520–540 (ATLL…IIGW).

The protein belongs to the ABC1 family. UbiB subfamily.

Its subcellular location is the cell inner membrane. It participates in cofactor biosynthesis; ubiquinone biosynthesis [regulation]. Its function is as follows. Is probably a protein kinase regulator of UbiI activity which is involved in aerobic coenzyme Q (ubiquinone) biosynthesis. The polypeptide is Probable protein kinase UbiB (Shewanella oneidensis (strain ATCC 700550 / JCM 31522 / CIP 106686 / LMG 19005 / NCIMB 14063 / MR-1)).